A 62-amino-acid polypeptide reads, in one-letter code: Large ribosomal subunit protein bL35 (62 aa).

The tract at residues 31 to 62 (HLAQNKTTKQKRQSRKSAQMHSSDLKRFKALI) is disordered. A compositionally biased stretch (basic and acidic residues) spans 53 to 62 (SDLKRFKALI).

Belongs to the bacterial ribosomal protein bL35 family.

The protein is Large ribosomal subunit protein bL35 of Mycoplasmopsis agalactiae (strain NCTC 10123 / CIP 59.7 / PG2) (Mycoplasma agalactiae).